The sequence spans 668 residues: Metastasis-associated protein MTA2 (668 aa).

The region spanning 1 to 144 (MAANMYRVGD…PVQKTLLADQ (144 aa)) is the BAH domain. Phosphoserine occurs at positions 52 and 54. The region spanning 145–256 (GEIRVGCKFQ…KAMSTLVPQG (112 aa)) is the ELM2 domain. Lysine 152 bears the N6-acetyllysine mark. The 53-residue stretch at 263–315 (DEMEEWSASEAMLFEEALEKYGKDFNDIRQDFLPWKSLASIVQFYYMWKTTDR) folds into the SANT domain. The segment at 367-394 (CESCHTTQSAQWYAWGPPNMQCRLCASC) adopts a GATA-type; atypical zinc-finger fold. Residues 412 to 437 (GAARGTTEPHSRGHLSRPEAQSLSPY) are disordered. Serine 433 and serine 435 each carry phosphoserine. Lysine 460 bears the N6-acetyllysine mark. Residue lysine 492 forms a Glycyl lysine isopeptide (Lys-Gly) (interchain with G-Cter in SUMO2 and SUMO3); alternate linkage. Lysine 492 participates in a covalent cross-link: Glycyl lysine isopeptide (Lys-Gly) (interchain with G-Cter in SUMO2); alternate. Lysine 508 participates in a covalent cross-link: Glycyl lysine isopeptide (Lys-Gly) (interchain with G-Cter in SUMO2). 2 positions are modified to N6-acetyllysine: lysine 522 and lysine 531. Threonine 534 carries the post-translational modification Phosphothreonine. Glycyl lysine isopeptide (Lys-Gly) (interchain with G-Cter in SUMO2) cross-links involve residues lysine 559 and lysine 595. Disordered stretches follow at residues 580-599 (ASGIRSSSQPAAKRQKLNPA) and 647-668 (PPVPLPASSHPASTNEPIVLED).

The protein belongs to the metastasis-associated protein family. Component of the nucleosome remodeling and deacetylase (NuRD) repressor complex, composed of core proteins MTA1, MTA2, MTA3, RBBP4, RBBP7, HDAC1, HDAC2, MBD2, MBD3, and peripherally associated proteins CDK2AP1, CDK2AP2, GATAD2A, GATAD2B, CHD3, CHD4 and CHD5. The exact stoichiometry of the NuRD complex is unknown, and some subunits such as MBD2 and MBD3, GATAD2A and GATAD2B, and CHD3, CHD4 and CHD5 define mutually exclusive NuRD complexes. Interacts with CHD3. Interacts with CHD4. Interacts with GATAD2A. Interacts with HDAC7. Interacts with MBD3. Interacts with p53/TP53. Interacts with MINT. Interacts with PIMREG. Interacts with NACC2. Interacts with ERCC6. Interacts with PWWP2B. Interacts with transcription factor BCL11A.

It is found in the nucleus. May function as a transcriptional coregulator. Acts as a component of the histone deacetylase NuRD complex which participates in the remodeling of chromatin. In Mus musculus (Mouse), this protein is Metastasis-associated protein MTA2 (Mta2).